Here is a 306-residue protein sequence, read N- to C-terminus: N-acetylmuramic acid 6-phosphate etherase (306 aa).

The SIS domain maps to 62–225 (IAQAFQNGGR…TTASMIRIGK (164 aa)). Glu90 functions as the Proton donor in the catalytic mechanism. The active site involves Glu121.

Belongs to the GCKR-like family. MurNAc-6-P etherase subfamily. As to quaternary structure, homodimer.

The enzyme catalyses N-acetyl-D-muramate 6-phosphate + H2O = N-acetyl-D-glucosamine 6-phosphate + (R)-lactate. It functions in the pathway amino-sugar metabolism; 1,6-anhydro-N-acetylmuramate degradation. It participates in amino-sugar metabolism; N-acetylmuramate degradation. Its pathway is cell wall biogenesis; peptidoglycan recycling. Its function is as follows. Specifically catalyzes the cleavage of the D-lactyl ether substituent of MurNAc 6-phosphate, producing GlcNAc 6-phosphate and D-lactate. Together with AnmK, is also required for the utilization of anhydro-N-acetylmuramic acid (anhMurNAc) either imported from the medium or derived from its own cell wall murein, and thus plays a role in cell wall recycling. The sequence is that of N-acetylmuramic acid 6-phosphate etherase from Vibrio atlanticus (strain LGP32) (Vibrio splendidus (strain Mel32)).